The chain runs to 360 residues: Isocitrate dehydrogenase [NAD] regulatory subunit B, mitochondrial (360 aa).

The N-terminal 113 residues, 1–113 (MLGRLRTVVK…MELRKALDLY (113 aa)), are a transit peptide targeting the mitochondrion. Residues serine 101, asparagine 103, arginine 107, and arginine 140 each coordinate substrate. Aspartate 227 serves as a coordination point for Mg(2+). NADP(+) is bound by residues 284-290 (HHVAADI) and asparagine 297.

The protein belongs to the isocitrate and isopropylmalate dehydrogenases family. In terms of assembly, heterooligomer of catalytic and regulatory subunits. Mg(2+) serves as cofactor. It depends on Mn(2+) as a cofactor.

The protein localises to the mitochondrion. The catalysed reaction is D-threo-isocitrate + NAD(+) = 2-oxoglutarate + CO2 + NADH. Functionally, performs an essential role in the oxidative function of the citric acid cycle. The sequence is that of Isocitrate dehydrogenase [NAD] regulatory subunit B, mitochondrial (idhB) from Dictyostelium discoideum (Social amoeba).